The sequence spans 281 residues: UPF0294 protein VC_2238 (281 aa).

The protein belongs to the UPF0294 family.

It is found in the cytoplasm. The protein is UPF0294 protein VC_2238 of Vibrio cholerae serotype O1 (strain ATCC 39315 / El Tor Inaba N16961).